The sequence spans 340 residues: Sideroflexin-5 (340 aa).

4 helical membrane passes run 103-123 (IFMP…VVGL), 163-183 (FIQG…GLNV), 254-274 (LTRV…MSML), and 287-307 (LLPV…PLAI).

It belongs to the sideroflexin family. As to expression, primarily expressed in the brain.

The protein localises to the mitochondrion inner membrane. It catalyses the reaction citrate(in) = citrate(out). Its function is as follows. Mitochondrial amino-acid transporter. Transports citrate. Does not act as a serine transporter: not able to mediate transport of serine into mitochondria. In brown adipose tissue, plays a role in the regulation of UCP1-dependent thermogenesis probably by supporting mitochondrial glycerol-3-phosphate utilization. The polypeptide is Sideroflexin-5 (Homo sapiens (Human)).